A 1248-amino-acid polypeptide reads, in one-letter code: von Willebrand factor A domain-containing protein 5B2 (1248 aa).

Residues 1 to 138 enclose the VIT domain; sequence MPGLYCPTSW…TMTVTLCSSR (138 aa). The interval 184 to 204 is disordered; sequence VGSPEEERPTWEQPTATPDVF. In terms of domain architecture, VWFA spans 354-527; it reads ELLFLLDGSG…KALEPALSDI (174 aa). 5 disordered regions span residues 590 to 650, 672 to 710, 751 to 789, 1008 to 1037, and 1126 to 1168; these read PEEV…SSDT, SASPEPGPGSTCSSESPGSQGPGSPSGSRPLDPPSQQGC, ALAGRSLSSPSGRANPVPGRARHPSLDAIPDGLGPEPGQ, SKSALGEPISPTGDHHGLPHQPPASSRLSL, and DSAT…SSDL. Positions 595 to 619 are enriched in polar residues; it reads SATSPGTEPTHTTEPLGTGTVSAEL. Low complexity-rich tracts occupy residues 684-701, 751-764, and 780-789; these read SSESPGSQGPGSPSGSRP, ALAGRSLSSPSGRA, and PDGLGPEPGQ. Positions 1127-1145 are enriched in low complexity; the sequence is SATASCSQSPSSGSEGPGQ. The segment covering 1159–1168 has biased composition (basic and acidic residues); it reads GMERQDSSDL.

The sequence is that of von Willebrand factor A domain-containing protein 5B2 (Vwa5b2) from Mus musculus (Mouse).